Here is a 352-residue protein sequence, read N- to C-terminus: Holliday junction branch migration complex subunit RuvB (352 aa).

Residues 4–185 form a large ATPase domain (RuvB-L) region; the sequence is ADRLIAATGP…FGIVQRLEFY (182 aa). ATP-binding positions include isoleucine 24, arginine 25, glycine 66, lysine 69, threonine 70, threonine 71, 132–134, arginine 175, tyrosine 185, and arginine 222; that span reads EDF. Threonine 70 serves as a coordination point for Mg(2+). A small ATPAse domain (RuvB-S) region spans residues 186–256; the sequence is STADLATIVS…IADLALNLLD (71 aa). Residues 259 to 352 are head domain (RuvB-H); that stretch reads ERGFDHQDRR…VDEFLDAVDD (94 aa). DNA is bound by residues arginine 295, arginine 314, and arginine 319.

Belongs to the RuvB family. As to quaternary structure, homohexamer. Forms an RuvA(8)-RuvB(12)-Holliday junction (HJ) complex. HJ DNA is sandwiched between 2 RuvA tetramers; dsDNA enters through RuvA and exits via RuvB. An RuvB hexamer assembles on each DNA strand where it exits the tetramer. Each RuvB hexamer is contacted by two RuvA subunits (via domain III) on 2 adjacent RuvB subunits; this complex drives branch migration. In the full resolvosome a probable DNA-RuvA(4)-RuvB(12)-RuvC(2) complex forms which resolves the HJ.

It is found in the cytoplasm. It carries out the reaction ATP + H2O = ADP + phosphate + H(+). Functionally, the RuvA-RuvB-RuvC complex processes Holliday junction (HJ) DNA during genetic recombination and DNA repair, while the RuvA-RuvB complex plays an important role in the rescue of blocked DNA replication forks via replication fork reversal (RFR). RuvA specifically binds to HJ cruciform DNA, conferring on it an open structure. The RuvB hexamer acts as an ATP-dependent pump, pulling dsDNA into and through the RuvAB complex. RuvB forms 2 homohexamers on either side of HJ DNA bound by 1 or 2 RuvA tetramers; 4 subunits per hexamer contact DNA at a time. Coordinated motions by a converter formed by DNA-disengaged RuvB subunits stimulates ATP hydrolysis and nucleotide exchange. Immobilization of the converter enables RuvB to convert the ATP-contained energy into a lever motion, pulling 2 nucleotides of DNA out of the RuvA tetramer per ATP hydrolyzed, thus driving DNA branch migration. The RuvB motors rotate together with the DNA substrate, which together with the progressing nucleotide cycle form the mechanistic basis for DNA recombination by continuous HJ branch migration. Branch migration allows RuvC to scan DNA until it finds its consensus sequence, where it cleaves and resolves cruciform DNA. In Pseudomonas fluorescens (strain ATCC BAA-477 / NRRL B-23932 / Pf-5), this protein is Holliday junction branch migration complex subunit RuvB.